Consider the following 67-residue polypeptide: Small ribosomal subunit protein eS17 (67 aa).

Belongs to the eukaryotic ribosomal protein eS17 family.

This chain is Small ribosomal subunit protein eS17, found in Haloquadratum walsbyi (strain DSM 16790 / HBSQ001).